Reading from the N-terminus, the 311-residue chain is Malate dehydrogenase (311 aa).

NAD(+) is bound by residues 7 to 13 (GAAGGIG) and aspartate 34. Positions 81 and 87 each coordinate substrate. Residues asparagine 94 and 117-119 (ITN) contribute to the NAD(+) site. Substrate contacts are provided by asparagine 119 and arginine 153. Histidine 177 serves as the catalytic Proton acceptor. Residue methionine 227 coordinates NAD(+).

It belongs to the LDH/MDH superfamily. MDH type 1 family. Homodimer.

The catalysed reaction is (S)-malate + NAD(+) = oxaloacetate + NADH + H(+). Its function is as follows. Catalyzes the reversible oxidation of malate to oxaloacetate. In Aliivibrio fischeri (strain ATCC 700601 / ES114) (Vibrio fischeri), this protein is Malate dehydrogenase.